A 114-amino-acid polypeptide reads, in one-letter code: UPF0342 protein SERP1381 (114 aa).

It belongs to the UPF0342 family.

This chain is UPF0342 protein SERP1381, found in Staphylococcus epidermidis (strain ATCC 35984 / DSM 28319 / BCRC 17069 / CCUG 31568 / BM 3577 / RP62A).